The following is a 376-amino-acid chain: Actin, cytoplasmic (376 aa).

This sequence belongs to the actin family.

It is found in the cytoplasm. It localises to the cytoskeleton. It carries out the reaction ATP + H2O = ADP + phosphate + H(+). Its function is as follows. Actins are highly conserved proteins that are involved in various types of cell motility and are ubiquitously expressed in all eukaryotic cells. The protein is Actin, cytoplasmic of Tetrahymena pyriformis.